The chain runs to 442 residues: UDP-N-acetylmuramoylalanine--D-glutamate ligase (442 aa).

Residue 115–121 participates in ATP binding; the sequence is GSNGKST.

Belongs to the MurCDEF family.

It is found in the cytoplasm. It carries out the reaction UDP-N-acetyl-alpha-D-muramoyl-L-alanine + D-glutamate + ATP = UDP-N-acetyl-alpha-D-muramoyl-L-alanyl-D-glutamate + ADP + phosphate + H(+). It functions in the pathway cell wall biogenesis; peptidoglycan biosynthesis. In terms of biological role, cell wall formation. Catalyzes the addition of glutamate to the nucleotide precursor UDP-N-acetylmuramoyl-L-alanine (UMA). This is UDP-N-acetylmuramoylalanine--D-glutamate ligase from Vibrio vulnificus (strain YJ016).